A 193-amino-acid chain; its full sequence is Protein hunchback (193 aa).

Disordered stretches follow at residues 16–126 and 146–193; these read SHHH…ATTT and SNDK…KYMA. Residues 17–31 show a composition bias toward basic residues; that stretch reads HHHHHHHAHHSHHQH. Composition is skewed to low complexity over residues 35–46 and 56–77; these read SNSNSNASSPHQ and SSNN…QQQQ. Residues 89–99 are compositionally biased toward polar residues; it reads PSPSNNDQNSR. The segment covering 174–193 has biased composition (basic and acidic residues); the sequence is EPEKEHDLMSNSSEDMKYMA.

This sequence belongs to the hunchback C2H2-type zinc-finger protein family.

It is found in the nucleus. Functionally, gap class segmentation protein that controls development of head structures. In Drosophila iki (Fruit fly), this protein is Protein hunchback (hb).